Reading from the N-terminus, the 23-residue chain is Coenzyme PQQ synthesis protein A (23 aa).

Positions 15–19 form a cross-link, pyrroloquinoline quinone (Glu-Tyr); that stretch reads EVTLY.

Belongs to the PqqA family.

Its pathway is cofactor biosynthesis; pyrroloquinoline quinone biosynthesis. Functionally, required for coenzyme pyrroloquinoline quinone (PQQ) biosynthesis. PQQ is probably formed by cross-linking a specific glutamate to a specific tyrosine residue and excising these residues from the peptide. This chain is Coenzyme PQQ synthesis protein A, found in Colwellia psychrerythraea (strain 34H / ATCC BAA-681) (Vibrio psychroerythus).